The sequence spans 492 residues: N-succinylglutamate 5-semialdehyde dehydrogenase (492 aa).

220-225 (GRANTG) is a binding site for NAD(+). Active-site residues include Glu243 and Cys277.

It belongs to the aldehyde dehydrogenase family. AstD subfamily.

It carries out the reaction N-succinyl-L-glutamate 5-semialdehyde + NAD(+) + H2O = N-succinyl-L-glutamate + NADH + 2 H(+). It functions in the pathway amino-acid degradation; L-arginine degradation via AST pathway; L-glutamate and succinate from L-arginine: step 4/5. In terms of biological role, catalyzes the NAD-dependent reduction of succinylglutamate semialdehyde into succinylglutamate. The chain is N-succinylglutamate 5-semialdehyde dehydrogenase from Shigella boydii serotype 4 (strain Sb227).